The following is a 344-amino-acid chain: GTP 3',8-cyclase (344 aa).

Positions 19–245 (PFGRAVTYLR…DIPYRTGGPA (227 aa)) constitute a Radical SAM core domain. R28 provides a ligand contact to GTP. Residues C35 and C39 each contribute to the [4Fe-4S] cluster site. Y41 is an S-adenosyl-L-methionine binding site. [4Fe-4S] cluster is bound at residue C42. R77 provides a ligand contact to GTP. G81 contributes to the S-adenosyl-L-methionine binding site. Position 111 (T111) interacts with GTP. S135 lines the S-adenosyl-L-methionine pocket. K171 serves as a coordination point for GTP. Residue M205 participates in S-adenosyl-L-methionine binding. Residues C268 and C271 each coordinate [4Fe-4S] cluster. 273–275 (RVR) provides a ligand contact to GTP. C285 contributes to the [4Fe-4S] cluster binding site.

It belongs to the radical SAM superfamily. MoaA family. As to quaternary structure, monomer and homodimer. [4Fe-4S] cluster serves as cofactor.

It carries out the reaction GTP + AH2 + S-adenosyl-L-methionine = (8S)-3',8-cyclo-7,8-dihydroguanosine 5'-triphosphate + 5'-deoxyadenosine + L-methionine + A + H(+). It participates in cofactor biosynthesis; molybdopterin biosynthesis. Catalyzes the cyclization of GTP to (8S)-3',8-cyclo-7,8-dihydroguanosine 5'-triphosphate. In Brucella canis (strain ATCC 23365 / NCTC 10854 / RM-666), this protein is GTP 3',8-cyclase.